Reading from the N-terminus, the 307-residue chain is Glutathione synthetase (307 aa).

Residues Lys-120–Leu-304 form the ATP-grasp domain. Ala-146 to Gly-202 serves as a coordination point for ATP. Mg(2+)-binding residues include Glu-275 and Asn-277.

Belongs to the prokaryotic GSH synthase family. Mg(2+) is required as a cofactor. The cofactor is Mn(2+).

The catalysed reaction is gamma-L-glutamyl-L-cysteine + glycine + ATP = glutathione + ADP + phosphate + H(+). It functions in the pathway sulfur metabolism; glutathione biosynthesis; glutathione from L-cysteine and L-glutamate: step 2/2. This Prochlorococcus marinus subsp. pastoris (strain CCMP1986 / NIES-2087 / MED4) protein is Glutathione synthetase.